Consider the following 141-residue polypeptide: Nucleoside diphosphate kinase 1 (141 aa).

Lys-11, Phe-59, Arg-87, Thr-93, Arg-104, and Asn-114 together coordinate ATP. Residue His-117 is the Pros-phosphohistidine intermediate of the active site.

It belongs to the NDK family. Homotetramer. It depends on Mg(2+) as a cofactor.

It localises to the cytoplasm. The catalysed reaction is a 2'-deoxyribonucleoside 5'-diphosphate + ATP = a 2'-deoxyribonucleoside 5'-triphosphate + ADP. It carries out the reaction a ribonucleoside 5'-diphosphate + ATP = a ribonucleoside 5'-triphosphate + ADP. Functionally, major role in the synthesis of nucleoside triphosphates other than ATP. The ATP gamma phosphate is transferred to the NDP beta phosphate via a ping-pong mechanism, using a phosphorylated active-site intermediate. This chain is Nucleoside diphosphate kinase 1, found in Protochlamydia amoebophila (strain UWE25).